A 611-amino-acid chain; its full sequence is MSGEKKEYPKEHIDLYQQIKWNGWGDTRKFLHQLKPSGTIAMTTPEVSSVPLPSLRGFIKKELTLPGEEDKPFVLDETPALQIENIHVDPPKQYPEFVRELKAFFLPDQLKDDKLARITHTFGKSLRDLIRVRIGQVKNAPDLIVLPHSHEEVERLVQLAHKYNVVIIPMGGGSNIVGAIEPVSNERFTVSIDMRRMNKVLWVDRREMTACIQVGIMGPELEKQLHKQGVSLGHDPDSFEFSTLGGWLATCSSGHQSDKYGDIEDMAVSFRTVTPTGTLELRNGARSGAGINYKHIILGSEGTLGIITEAVMKVHAVPQAVEYYGFLFPTFAHAVSALQQIRSSEVIPTMIRVYDPEETQLSFAWKPSKGAVSEFTSAMVKKYLHYIRSFDFKNVCLSIIGFEGPKKVVDFHRTSVFDILSKNAAFGLGSAPGKTWAEKRYDLPYIRDFLLDHNMWVDVAETTVSYANLQTLWKDAKQTFVKHFKDQGIPAWICAHISHTYTNGVCLYFIFASKQNENKDMAQYIEAKKLMTDIIFKYGGSLSHHHGVGYEHVPWMTRYATRGWINVYRSLKETIDPKDICNPRKLIPTIKEENNKEPFLFDVVNVKYPKL.

The 181-residue stretch at 137–317 (VKNAPDLIVL…TEAVMKVHAV (181 aa)) folds into the FAD-binding PCMH-type domain. Residues 169-175 (PMGGGSN), 237-243 (DSFEFST), 250-255 (TCSSGH), and 301-307 (EGTLGII) each bind FAD. Arginine 447 is a substrate binding site. Tyrosine 508 (proton donor/acceptor) is an active-site residue. The tract at residues 544–546 (HHH) is important for enzyme activity. The Microbody targeting signal motif lies at 609–611 (PKL).

The protein belongs to the FAD-binding oxidoreductase/transferase type 4 family. Homodimer. The cofactor is FAD.

The protein resides in the peroxisome. It carries out the reaction a long chain fatty alcohol + a 1-acylglycerone 3-phosphate = a 1-O-alkylglycerone 3-phosphate + a long-chain fatty acid + H(+). Its pathway is glycerolipid metabolism; ether lipid biosynthesis. Functionally, catalyzes the exchange of an acyl for a long-chain alkyl group and the formation of the ether bond in the biosynthesis of ether phospholipids. This Dictyostelium discoideum (Social amoeba) protein is Alkyldihydroxyacetonephosphate synthase (eapA).